A 379-amino-acid chain; its full sequence is Alcohol dehydrogenase 1 (379 aa).

Zn(2+)-binding residues include Cys-47, Thr-49, His-69, Cys-99, Cys-102, Cys-105, Cys-113, and Cys-177. Thr-49 and His-69 together coordinate an alcohol. Thr-49 lines the NAD(+) pocket. Residues 202 to 207 (GLGAVG), Asp-226, Arg-231, Thr-272, Val-295, 295 to 297 (VGV), Phe-322, and Arg-372 each bind NAD(+).

This sequence belongs to the zinc-containing alcohol dehydrogenase family. Homodimer. The cofactor is Zn(2+).

It is found in the cytoplasm. It carries out the reaction a primary alcohol + NAD(+) = an aldehyde + NADH + H(+). The enzyme catalyses a secondary alcohol + NAD(+) = a ketone + NADH + H(+). This chain is Alcohol dehydrogenase 1 (ADH1), found in Cenchrus americanus (Pearl millet).